A 292-amino-acid polypeptide reads, in one-letter code: MSLNVKQSRIAILFSSCLISISFFSQANTKGIDEIKNLETDFNGRIGVYALDTGSGKSFSYRANERFPLCSSFKGFLAAAVLKGSQDNRLNLNQIVNYNTRSLEFHSPITTKYKDNGMSLGDMAAAALQYSDNGATNIILERYIGGPEGMTKFMRSIGDEDFRLDRWELDLNTAIPGDERDTSTPAAVAKSLKTLALGNILSEHEKETYQTWLKGNTTGAARIRASVPSDWVVGDKTGSCGAYGTANDYAVVWPKNRAPLIISVYTTKNEKEAKHEDKVIAEASRIAIDNLK.

Positions 1-27 are cleaved as a signal peptide; that stretch reads MSLNVKQSRIAILFSSCLISISFFSQA. Cysteine 70 and cysteine 240 are joined by a disulfide. Serine 71 serves as the catalytic Acyl-ester intermediate. 236–238 lines the substrate pocket; sequence KTG.

It belongs to the class-A beta-lactamase family.

It catalyses the reaction a beta-lactam + H2O = a substituted beta-amino acid. Functionally, hydrolyzes carbapenems such as imipenem, which are extended-spectrum beta-lactam antibiotics. In Enterobacter cloacae, this protein is Imipenem-hydrolyzing beta-lactamase (nmcA).